Consider the following 138-residue polypeptide: MMTIRPTKSTDFEVFTPAHHDILEAKAAGIEPSFPDASECVTLSLYGFPLAIGGNCGDQCWFVTSDQVWRLSGKAKRKFRKLIMEYRDKMLEKYDTLWNYVWVGNTSHIRFLKTIGAVFHEEYTRDGQFQLFTITKGG.

May act as an organizer for the correct association of several proteins in the surrounding of the head-tail connector protein gp8. The polypeptide is Probable scaffold protein gp13 (Escherichia coli (Bacteriophage T7)).